Reading from the N-terminus, the 389-residue chain is Alanine racemase (389 aa).

K46 serves as the catalytic Proton acceptor; specific for D-alanine. K46 bears the N6-(pyridoxal phosphate)lysine mark. R144 contributes to the substrate binding site. The active-site Proton acceptor; specific for L-alanine is Y275. M323 lines the substrate pocket.

It belongs to the alanine racemase family. Pyridoxal 5'-phosphate serves as cofactor.

The enzyme catalyses L-alanine = D-alanine. It functions in the pathway amino-acid biosynthesis; D-alanine biosynthesis; D-alanine from L-alanine: step 1/1. In terms of biological role, catalyzes the interconversion of L-alanine and D-alanine. May also act on other amino acids. The sequence is that of Alanine racemase (alr) from Mycolicibacterium smegmatis (strain ATCC 700084 / mc(2)155) (Mycobacterium smegmatis).